Consider the following 310-residue polypeptide: Olfactory receptor 2A14 (310 aa).

Residues 1-24 (MEGNKTWITDITLPRFQVGPALEI) lie on the Extracellular side of the membrane. A glycan (N-linked (GlcNAc...) asparagine) is linked at Asn-4. Residues 25–48 (LLCGLFSAFYTLTLLGNGVIFGII) form a helical membrane-spanning segment. The Cytoplasmic segment spans residues 49–56 (CLDCKLHT). Residues 57–78 (PMYFFLSHLAIVDISYASNYVP) traverse the membrane as a helical segment. Topologically, residues 79–99 (KMLTNLMNQESTISFFPCIMQ) are extracellular. Cys-96 and Cys-188 are disulfide-bonded. A helical transmembrane segment spans residues 100 to 119 (TFLYLAFAHVECLILVVMSY). Residues 120–138 (DRYADICHPLRYNSLMSWR) lie on the Cytoplasmic side of the membrane. The helical transmembrane segment at 139 to 157 (VCTVLAVASWVFSFLLALV) threads the bilayer. Residues 158–194 (PLVLILSLPFCGPHEINHFFCEILSVLKLACADTWLN) lie on the Extracellular side of the membrane. Residues 195–218 (QVVIFAACVFILVGPLCLVLVSYL) traverse the membrane as a helical segment. Residues 219–235 (RILAAILRIQSGEGRRK) are Cytoplasmic-facing. Residues 236–258 (AFSTCSSHLCVVGLFFGSAIVTY) traverse the membrane as a helical segment. Over 259–271 (MAPKSRHPEEQQK) the chain is Extracellular. Residues 272–291 (VLSLFYSLFNPMLNPLIYSL) traverse the membrane as a helical segment. The Cytoplasmic segment spans residues 292-310 (RNAEVKGALRRALRKERLT).

Belongs to the G-protein coupled receptor 1 family.

It is found in the cell membrane. Its function is as follows. Odorant receptor. The sequence is that of Olfactory receptor 2A14 (OR2A14) from Homo sapiens (Human).